A 227-amino-acid chain; its full sequence is Cytidylate kinase (227 aa).

An ATP-binding site is contributed by 7-15 (GPSGAGKGT).

The protein belongs to the cytidylate kinase family. Type 1 subfamily.

The protein resides in the cytoplasm. It catalyses the reaction CMP + ATP = CDP + ADP. The catalysed reaction is dCMP + ATP = dCDP + ADP. The chain is Cytidylate kinase from Actinobacillus succinogenes (strain ATCC 55618 / DSM 22257 / CCUG 43843 / 130Z).